The chain runs to 248 residues: tRNA1(Val) (adenine(37)-N6)-methyltransferase (248 aa).

Belongs to the methyltransferase superfamily. tRNA (adenine-N(6)-)-methyltransferase family.

It is found in the cytoplasm. It catalyses the reaction adenosine(37) in tRNA1(Val) + S-adenosyl-L-methionine = N(6)-methyladenosine(37) in tRNA1(Val) + S-adenosyl-L-homocysteine + H(+). Functionally, specifically methylates the adenine in position 37 of tRNA(1)(Val) (anticodon cmo5UAC). The sequence is that of tRNA1(Val) (adenine(37)-N6)-methyltransferase from Yersinia pseudotuberculosis serotype O:1b (strain IP 31758).